The chain runs to 177 residues: Large ribosomal subunit protein uL6 (177 aa).

Basic and acidic residues predominate over residues 154 to 171 (PEPYKGKGVRYADEQVRR). Residues 154–177 (PEPYKGKGVRYADEQVRRKEAKKK) form a disordered region.

The protein belongs to the universal ribosomal protein uL6 family. Part of the 50S ribosomal subunit.

Functionally, this protein binds to the 23S rRNA, and is important in its secondary structure. It is located near the subunit interface in the base of the L7/L12 stalk, and near the tRNA binding site of the peptidyltransferase center. This chain is Large ribosomal subunit protein uL6, found in Marinobacter nauticus (strain ATCC 700491 / DSM 11845 / VT8) (Marinobacter aquaeolei).